Reading from the N-terminus, the 610-residue chain is MIQVLLVTILAVFPYQGSSIILGSGNVNDYEVVYPRKVTALPKGAVQPKYEDAMQYELKVNGEPMVLHLEKNKQLFSKDYSETHYSPDGREITTYPLVEDHCYYHGRIENDADSTASISACNGLKGHFKLQGEIYLIEPLKLRDSEAHAVFKYENVEKEDEAPKMCGVTQNWESYEPIKKASQLVVTAEQQRYLNPYRYVELVIVADHGMFTKYNRNLTEVKTWVYEIVNTLNEIYRYLYIRVALVGLEIWSDGDLSNVTLSSGNTLDSFGEWRKRDLLRRKRHDNAQLLTAIDFSGNTIGRASIANMCDPKYSTGIVQDHSPINLLVAVTMAHEMGHNLGLHHDGKSCTCGDYICIMNATLSHQHSKYFSNCSYNQYWDYINTYTPKCILNEPLRTDIISPPVCGNELLEAGEECDCGSPRNCQYQCCDAATCKLHSWVECESGVCCEQCKFRTAGTECRARRSECDIAESCTGQSADCPTDDFHKNGQPCLNNFGYCYNGNCPIMYHQCYALFGSNVYEAEDSCFESNQKGDDYGYCRKENGEKIPCAPEDVKCGRLYCNDNSPGQNDPCKIFPSNEDEHKEMVLPGTKCADGKFCTNGHCVDVATAY.

A signal peptide spans 1-19; sequence MIQVLLVTILAVFPYQGSS. Residues 20 to 188 constitute a propeptide that is removed on maturation; the sequence is IILGSGNVND…KKASQLVVTA (169 aa). The region spanning 198–394 is the Peptidase M12B domain; the sequence is RYVELVIVAD…YTPKCILNEP (197 aa). Ca(2+) is bound at residue Glu201. N-linked (GlcNAc...) asparagine glycosylation is present at Asn217. Residue Asp285 participates in Ca(2+) binding. Intrachain disulfides connect Cys309-Cys389, Cys349-Cys373, and Cys351-Cys356. Residue His334 coordinates Zn(2+). Glu335 is an active-site residue. Residues His338 and His344 each contribute to the Zn(2+) site. Cys389, Asn392, Val404, Asn407, Glu411, Glu414, and Asp417 together coordinate Ca(2+). In terms of domain architecture, Disintegrin spans 402–488; sequence PPVCGNELLE…DCPTDDFHKN (87 aa). 14 disulfide bridges follow: Cys405–Cys434, Cys416–Cys429, Cys418–Cys424, Cys428–Cys451, Cys442–Cys448, Cys447–Cys473, Cys460–Cys480, Cys467–Cys499, Cys492–Cys504, Cys511–Cys561, Cys526–Cys572, Cys539–Cys549, Cys556–Cys598, and Cys592–Cys603. The short motif at 466–468 is the D/ECD-tripeptide element; sequence ECD.

Belongs to the venom metalloproteinase (M12B) family. P-III subfamily. Zn(2+) serves as cofactor. Expressed by the venom gland.

Its subcellular location is the secreted. Functionally, snake venom metalloproteinase that impairs hemostasis in the envenomed animal. The chain is Zinc metalloproteinase-disintegrin-like 3a from Crotalus adamanteus (Eastern diamondback rattlesnake).